Reading from the N-terminus, the 451-residue chain is Gamma-aminobutyric acid receptor subunit alpha-2 (451 aa).

Positions 1–28 are cleaved as a signal peptide; sequence MKTKLNSSNMQLLLFVFLAWDPARLVLA. At 29-249 the chain is on the extracellular side; it reads NIQEDEAKNN…MTAHFHLKRK (221 aa). N-linked (GlcNAc...) asparagine glycosylation is present at Asn-38. Residue Arg-94 coordinates 4-aminobutanoate. An N-linked (GlcNAc...) asparagine glycan is attached at Asn-138. 4-aminobutanoate is bound at residue Thr-157. An intrachain disulfide couples Cys-166 to Cys-180. Residue Asn-201 is glycosylated (N-linked (GlcNAc...) asparagine). Residues 250–270 traverse the membrane as a helical segment; that stretch reads IGYFVIQTYLPCIMTVILSQV. Residues 271 to 280 lie on the Cytoplasmic side of the membrane; it reads SFWLNRESVP. Residues 281–300 traverse the membrane as a helical segment; sequence ARTVFGVTTVLTMTTLSISA. Topologically, residues 301 to 311 are extracellular; that stretch reads RNSLPKVAYAT. The chain crosses the membrane as a helical span at residues 312–332; sequence AMDWFIAVCYAFVFSALIEFA. At 333-420 the chain is on the cytoplasmic side; the sequence is TVNYFTKRGW…FNSVSKIDRM (88 aa). A helical transmembrane segment spans residues 421–441; that stretch reads SRIVFPVLFGTFNLVYWATYL. Residues 442–451 are Extracellular-facing; that stretch reads NREPVLGVSP.

Belongs to the ligand-gated ion channel (TC 1.A.9) family. Gamma-aminobutyric acid receptor (TC 1.A.9.5) subfamily. GABRA2 sub-subfamily. In terms of assembly, heteropentamer, formed by a combination of alpha (GABRA1-6), beta (GABRB1-3), gamma (GABRG1-3), delta (GABRD), epsilon (GABRE), rho (GABRR1-3), pi (GABRP) and theta (GABRQ) subunits, each subunit exhibiting distinct physiological and pharmacological properties. Interacts with UBQLN1. Interacts with KIF21B. Interacts with LHFPL4. Interacts with SHISA7; interaction leads to the regulation of GABA(A) receptor trafficking, channel deactivation kinetics and pharmacology. In terms of processing, glycosylated.

It localises to the postsynaptic cell membrane. The protein resides in the cell membrane. Its subcellular location is the cytoplasmic vesicle membrane. The protein localises to the cell projection. It is found in the dendrite. The catalysed reaction is chloride(in) = chloride(out). With respect to regulation, activated by pentobarbital. Inhibited by the antagonist bicuculline. Its function is as follows. Alpha subunit of the heteropentameric ligand-gated chloride channel gated by gamma-aminobutyric acid (GABA), a major inhibitory neurotransmitter in the brain. GABA-gated chloride channels, also named GABA(A) receptors (GABAAR), consist of five subunits arranged around a central pore and contain GABA active binding site(s) located at the alpha and beta subunit interface(s). When activated by GABA, GABAARs selectively allow the flow of chloride anions across the cell membrane down their electrochemical gradient. Chloride influx into the postsynaptic neuron following GABAAR opening decreases the neuron ability to generate a new action potential, thereby reducing nerve transmission. The alpha-2 subunit exhibits synaptogenic activity together with beta-2 and very little to no activity together with beta-3, the gamma-2 subunit being necessary but not sufficient to induce rapid synaptic contacts formation. This chain is Gamma-aminobutyric acid receptor subunit alpha-2 (GABRA2), found in Bos taurus (Bovine).